We begin with the raw amino-acid sequence, 346 residues long: Selenoprotein V (346 aa).

Disordered regions lie at residues 1–40 (MNNQ…VRTR) and 151–206 (LDPP…PGPT). Pro residues predominate over residues 151 to 162 (LDPPPEPAPELP). The segment at residues 270–273 (CGLU) is a cross-link (cysteinyl-selenocysteine (Cys-Sec); redox-active). Sec273 is a non-standard amino acid (selenocysteine).

It belongs to the SelWTH family. Post-translationally, truncated SELENOV proteins produced by failed UGA/Sec decoding are ubiquitinated by the CRL2(APPBP2) complex, which recognizes the glycine (Gly) at the C-terminus of truncated SELENOV proteins. As to expression, testis specific.

Its function is as follows. May be involved in a redox-related process. In Homo sapiens (Human), this protein is Selenoprotein V.